The sequence spans 616 residues: Chaperone protein HscA (616 aa).

It belongs to the heat shock protein 70 family.

Chaperone involved in the maturation of iron-sulfur cluster-containing proteins. Has a low intrinsic ATPase activity which is markedly stimulated by HscB. Involved in the maturation of IscU. This Yersinia enterocolitica serotype O:8 / biotype 1B (strain NCTC 13174 / 8081) protein is Chaperone protein HscA.